Consider the following 653-residue polypeptide: Protein SCARECROW (653 aa).

Disordered stretches follow at residues 1 to 69 (MAES…RRVS) and 193 to 265 (PSSS…AVQT). Low complexity predominate over residues 17–31 (PLRTTSSGSSSSNNR). A compositionally biased stretch (pro residues) spans 32-41 (GPPPPPPPPL). Residues 51–63 (EMSSNPDYNNSSR) are compositionally biased toward polar residues. Residues 209–230 (QISNNPSPPQQQQQHQQQQQQH) are compositionally biased toward low complexity. Positions 246-265 (STDAPPQPETVTATVPAVQT) are enriched in polar residues. The 370-residue stretch at 281–650 (QKQDEEGLHL…LSLLTASAWT (370 aa)) folds into the GRAS domain. A leucine repeat I (LRI) region spans residues 288-351 (LHLLTLLLQC…LLNSCLGIYA (64 aa)). The LxCxE motif motif lies at 295 to 299 (LQCAE). The tract at residues 370 to 435 (FQVFNGISPL…GGPPHVRLTG (66 aa)) is VHIID. A VHIID motif is present at residues 401–405 (VHIID). The tract at residues 445–477 (ATGKRLSDFADKLGLPFEFCPLAEKVGNLDTER) is leucine repeat II (LRII). A PFYRE region spans residues 486-573 (VAVHWLQHSL…QQLLSKEIRN (88 aa)). Residues 576–650 (AVGGPSRSGE…LSLLTASAWT (75 aa)) form an SAW region.

This sequence belongs to the GRAS family. Interacts with SHR, JKD and MGP. Interacts with SIEL. Interacts with RBR1 through its the LxCxE motif. In terms of tissue distribution, expressed in siliques, leaves and roots. Detected in the initial daughter cell before its asymmetric division and remains expressed only in the endodermal cell layer after the division. Expressed in the endodermis or starch sheath of the seedling hypocotyl, in the leaf bundle sheath cells and the root quiescent center.

The protein localises to the nucleus. Transcription factor required for quiescent center cells specification and maintenance of surrounding stem cells, and for the asymmetric cell division involved in radial pattern formation in roots. Essential for cell division but not differentiation of the ground tissue. Also required for normal shoot gravitropism. Regulates the radial organization of the shoot axial organs. Binds to the promoter of MGP, NUC, RLK and SCL3. Restricts SHR movment and sequesters it into the nucleus of the endodermis. This Arabidopsis thaliana (Mouse-ear cress) protein is Protein SCARECROW.